The chain runs to 207 residues: Probable GTP-binding protein EngB (207 aa).

Residues 23–197 (AGIEVVFAGR…ETVIGRWLFA (175 aa)) enclose the EngB-type G domain. GTP-binding positions include 31 to 38 (GRSNAGKS), 58 to 62 (GRTQL), 76 to 79 (DLPG), 143 to 146 (TKAD), and 176 to 178 (FSS). Mg(2+) contacts are provided by serine 38 and threonine 60.

This sequence belongs to the TRAFAC class TrmE-Era-EngA-EngB-Septin-like GTPase superfamily. EngB GTPase family. Mg(2+) is required as a cofactor.

Functionally, necessary for normal cell division and for the maintenance of normal septation. In Methylobacillus flagellatus (strain ATCC 51484 / DSM 6875 / VKM B-1610 / KT), this protein is Probable GTP-binding protein EngB.